We begin with the raw amino-acid sequence, 547 residues long: Glucose-6-phosphate isomerase (547 aa).

The active-site Proton donor is the E351. Residues H382 and K510 contribute to the active site.

Belongs to the GPI family.

The protein localises to the cytoplasm. The catalysed reaction is alpha-D-glucose 6-phosphate = beta-D-fructose 6-phosphate. Its pathway is carbohydrate biosynthesis; gluconeogenesis. It participates in carbohydrate degradation; glycolysis; D-glyceraldehyde 3-phosphate and glycerone phosphate from D-glucose: step 2/4. Functionally, catalyzes the reversible isomerization of glucose-6-phosphate to fructose-6-phosphate. This chain is Glucose-6-phosphate isomerase, found in Saccharophagus degradans (strain 2-40 / ATCC 43961 / DSM 17024).